The sequence spans 493 residues: Glutamate--tRNA ligase (493 aa).

The 'HIGH' region signature appears at 10–20; the sequence is PSPTGTPHVGL. The 'KMSKS' region signature appears at 254-258; the sequence is KLSKR. Lysine 257 is a binding site for ATP.

Belongs to the class-I aminoacyl-tRNA synthetase family. Glutamate--tRNA ligase type 1 subfamily. In terms of assembly, monomer.

It is found in the cytoplasm. It catalyses the reaction tRNA(Glu) + L-glutamate + ATP = L-glutamyl-tRNA(Glu) + AMP + diphosphate. Its function is as follows. Catalyzes the attachment of glutamate to tRNA(Glu) in a two-step reaction: glutamate is first activated by ATP to form Glu-AMP and then transferred to the acceptor end of tRNA(Glu). This chain is Glutamate--tRNA ligase, found in Corynebacterium glutamicum (strain ATCC 13032 / DSM 20300 / JCM 1318 / BCRC 11384 / CCUG 27702 / LMG 3730 / NBRC 12168 / NCIMB 10025 / NRRL B-2784 / 534).